The primary structure comprises 263 residues: Putative SNAP25 homologous protein SNAP30 (263 aa).

Disordered regions lie at residues 1 to 61 (MFGF…LQSQ) and 132 to 209 (NLGG…DGLS). Composition is skewed to polar residues over residues 8 to 34 (PGNN…TSSE) and 52 to 61 (FNDSGGLQSQ). Residues 158-173 (KPSKKSENHKEEREKL) are compositionally biased toward basic and acidic residues. Over residues 180-194 (RSSSQPALDQPTNAL) the composition is skewed to polar residues. Over residues 197-206 (VEQEKAKQDD) the composition is skewed to basic and acidic residues. The t-SNARE coiled-coil homology domain occupies 198-260 (EQEKAKQDDG…QGANQRARHL (63 aa)).

It belongs to the SNAP-25 family.

It localises to the membrane. The protein resides in the cytoplasm. Its function is as follows. Vesicle trafficking protein that functions in the secretory pathway. In Arabidopsis thaliana (Mouse-ear cress), this protein is Putative SNAP25 homologous protein SNAP30 (SNAP30).